The primary structure comprises 535 residues: Bifunctional purine biosynthesis protein PurH (535 aa).

The region spanning 6 to 151 (TRLPIRRALI…KNHKDVAIVV (146 aa)) is the MGS-like domain.

It belongs to the PurH family.

It catalyses the reaction (6R)-10-formyltetrahydrofolate + 5-amino-1-(5-phospho-beta-D-ribosyl)imidazole-4-carboxamide = 5-formamido-1-(5-phospho-D-ribosyl)imidazole-4-carboxamide + (6S)-5,6,7,8-tetrahydrofolate. The enzyme catalyses IMP + H2O = 5-formamido-1-(5-phospho-D-ribosyl)imidazole-4-carboxamide. It functions in the pathway purine metabolism; IMP biosynthesis via de novo pathway; 5-formamido-1-(5-phospho-D-ribosyl)imidazole-4-carboxamide from 5-amino-1-(5-phospho-D-ribosyl)imidazole-4-carboxamide (10-formyl THF route): step 1/1. It participates in purine metabolism; IMP biosynthesis via de novo pathway; IMP from 5-formamido-1-(5-phospho-D-ribosyl)imidazole-4-carboxamide: step 1/1. In Pseudomonas aeruginosa (strain LESB58), this protein is Bifunctional purine biosynthesis protein PurH.